The chain runs to 427 residues: UPF0229 protein YeaH (427 aa).

Basic and acidic residues predominate over residues 79–90 (NDHFIQNDRIER). The segment at 79-110 (NDHFIQNDRIERPQGGGGGSGSGQGQASQDGE) is disordered. Positions 92-102 (QGGGGGSGSGQ) are enriched in gly residues.

This sequence belongs to the UPF0229 family.

The sequence is that of UPF0229 protein YeaH from Salmonella paratyphi B (strain ATCC BAA-1250 / SPB7).